The sequence spans 364 residues: Aminomethyltransferase (364 aa).

This sequence belongs to the GcvT family. The glycine cleavage system is composed of four proteins: P, T, L and H.

It catalyses the reaction N(6)-[(R)-S(8)-aminomethyldihydrolipoyl]-L-lysyl-[protein] + (6S)-5,6,7,8-tetrahydrofolate = N(6)-[(R)-dihydrolipoyl]-L-lysyl-[protein] + (6R)-5,10-methylene-5,6,7,8-tetrahydrofolate + NH4(+). Its function is as follows. The glycine cleavage system catalyzes the degradation of glycine. In Salmonella paratyphi C (strain RKS4594), this protein is Aminomethyltransferase.